The following is a 309-amino-acid chain: Ribonuclease Z (309 aa).

His-63, His-65, Asp-67, His-68, His-145, Asp-216, and His-274 together coordinate Zn(2+). Asp-67 serves as the catalytic Proton acceptor.

This sequence belongs to the RNase Z family. As to quaternary structure, homodimer. It depends on Zn(2+) as a cofactor.

The enzyme catalyses Endonucleolytic cleavage of RNA, removing extra 3' nucleotides from tRNA precursor, generating 3' termini of tRNAs. A 3'-hydroxy group is left at the tRNA terminus and a 5'-phosphoryl group is left at the trailer molecule.. Its function is as follows. Zinc phosphodiesterase, which displays some tRNA 3'-processing endonuclease activity. Probably involved in tRNA maturation, by removing a 3'-trailer from precursor tRNA. This Streptococcus uberis (strain ATCC BAA-854 / 0140J) protein is Ribonuclease Z.